The sequence spans 454 residues: Bifunctional protein GlmU (454 aa).

The tract at residues 1-226 (MTTTVIILAA…AFEVEGVNDR (226 aa)) is pyrophosphorylase. Residues 8-11 (LAAG), Lys22, Gln73, 78-79 (GT), 100-102 (YGD), Gly137, Glu151, Asn166, and Asn224 contribute to the UDP-N-acetyl-alpha-D-glucosamine site. Asp102 serves as a coordination point for Mg(2+). Asn224 contacts Mg(2+). The linker stretch occupies residues 227–247 (LQLAALEREFQLQQAKSLMQQ). The interval 248–454 (GVTLTDPSRF…NYQRPQKLKK (207 aa)) is N-acetyltransferase. Positions 330 and 348 each coordinate UDP-N-acetyl-alpha-D-glucosamine. Residue His360 is the Proton acceptor of the active site. Positions 363 and 374 each coordinate UDP-N-acetyl-alpha-D-glucosamine. Residues Ala377, 383-384 (NY), Ser402, Ala420, and Arg437 each bind acetyl-CoA.

In the N-terminal section; belongs to the N-acetylglucosamine-1-phosphate uridyltransferase family. The protein in the C-terminal section; belongs to the transferase hexapeptide repeat family. Homotrimer. The cofactor is Mg(2+).

It localises to the cytoplasm. The catalysed reaction is alpha-D-glucosamine 1-phosphate + acetyl-CoA = N-acetyl-alpha-D-glucosamine 1-phosphate + CoA + H(+). It carries out the reaction N-acetyl-alpha-D-glucosamine 1-phosphate + UTP + H(+) = UDP-N-acetyl-alpha-D-glucosamine + diphosphate. Its pathway is nucleotide-sugar biosynthesis; UDP-N-acetyl-alpha-D-glucosamine biosynthesis; N-acetyl-alpha-D-glucosamine 1-phosphate from alpha-D-glucosamine 6-phosphate (route II): step 2/2. The protein operates within nucleotide-sugar biosynthesis; UDP-N-acetyl-alpha-D-glucosamine biosynthesis; UDP-N-acetyl-alpha-D-glucosamine from N-acetyl-alpha-D-glucosamine 1-phosphate: step 1/1. It participates in bacterial outer membrane biogenesis; LPS lipid A biosynthesis. Its function is as follows. Catalyzes the last two sequential reactions in the de novo biosynthetic pathway for UDP-N-acetylglucosamine (UDP-GlcNAc). The C-terminal domain catalyzes the transfer of acetyl group from acetyl coenzyme A to glucosamine-1-phosphate (GlcN-1-P) to produce N-acetylglucosamine-1-phosphate (GlcNAc-1-P), which is converted into UDP-GlcNAc by the transfer of uridine 5-monophosphate (from uridine 5-triphosphate), a reaction catalyzed by the N-terminal domain. The protein is Bifunctional protein GlmU of Acinetobacter baylyi (strain ATCC 33305 / BD413 / ADP1).